We begin with the raw amino-acid sequence, 566 residues long: MDYGEAEDRDWRFPDTPMHCGVNMPSGSVSDMDRDYGHGGYGGPRSMDSYLNQSYGMESHGGGGGGGGGGGNRFGPYESYDSGSSLGGRDLYRSGYGYNEPEQSRFGGSYGGRFDNSYRNSLDSFGGRNQGGSSWEAPYSRSKLRPGFMEDRGRESYSSYSSFSSPHMKPAPVGSRGRGTPAYPESGFGSRNYDAFGGPSTGRGRGRGHMGDFGGMHRPGIVVDYHNKPSPAAVAARGIKRKMMPQPYNKPGGTFIKKPKMTKPILKLTQKKSSNMKSSFQDSTIEEIEVDTSGAVVIYEDFTRDAYDVGYQTFGDSKGEGKSEEEEKRRIEARREKQRRRREKNSEKYGDGYRMAFTCSFCKFRTFEEKEIESHLESAAHQETLDHIQKQTKFDKVVMEFLHECMVNKFKKTAMRKQQTSNQTENAQAVEKDIMEGVTADDHMMKVETVHCSACSVYVPALHSSVQQHLKSPDHTKGKQAYREQIKRESVLTATSILNNPIVKARYELYVKGENPFEINDQAQEQQTEEEDKAEEPAEGEEEEEEEEEEETEEQTDFTLDHTEDN.

Disordered stretches follow at residues 19 to 81 and 145 to 180; these read HCGV…ESYD and RPGF…GRGT. The span at 59–73 shows a compositional bias: gly residues; it reads SHGGGGGGGGGGGNR. Positions 156–165 are enriched in low complexity; sequence SYSSYSSFSS. The Bipartite nuclear localization signal motif lies at 240-263; that stretch reads KRKMMPQPYNKPGGTFIKKPKMTK. Positions 314 to 347 are disordered; it reads FGDSKGEGKSEEEEKRRIEARREKQRRRREKNSE. Basic and acidic residues predominate over residues 317–335; the sequence is SKGEGKSEEEEKRRIEARR. 2 consecutive C2H2 AKAP95-type zinc fingers follow at residues 359–381 and 452–475; these read CSFC…SAAH and CSAC…SPDH. A disordered region spans residues 516 to 566; sequence PFEINDQAQEQQTEEEDKAEEPAEGEEEEEEEEEEETEEQTDFTLDHTEDN. Residues 527-556 show a composition bias toward acidic residues; that stretch reads QTEEEDKAEEPAEGEEEEEEEEEEETEEQT.

It belongs to the AKAP95 family. Component of the DBIRD complex.

The protein resides in the nucleus. Functionally, core component of the DBIRD complex, a multiprotein complex that acts at the interface between core mRNP particles and RNA polymerase II (RNAPII) and integrates transcript elongation with the regulation of alternative splicing. This is DBIRD complex subunit ZNF326 (ZNF326) from Gallus gallus (Chicken).